The chain runs to 862 residues: Ecdysone-induced protein 78C (862 aa).

Disordered regions lie at residues 28–83 (SSEQ…EEAL), 97–138 (LHFF…KQHH), 173–210 (ASLSPQQQQQRQHTHQQQQQQQQQQQHPGQQQHQLNCT), and 230–353 (ASNH…NNNN). Positions 37-46 (KQEDLIKDFT) are enriched in basic and acidic residues. The segment covering 47-82 (RDEEEQPSEEEAEEEDNEEDEEEEGEEEEEDEDEEA) has biased composition (acidic residues). Polar residues predominate over residues 105 to 119 (DSSTQGAYSEANSLE). Composition is skewed to low complexity over residues 173 to 206 (ASLSPQQQQQRQHTHQQQQQQQQQQQHPGQQQHQ), 230 to 291 (ASNH…NNSV), 308 to 335 (QQQQPLPTTQLQQQQQHQQQLQHPQQQQ), and 342 to 353 (SSSSNGSSNNNN). A DNA-binding region (nuclear receptor) is located at residues 360-435 (FVPCKVCGDK…AGMSRDSVRY (76 aa)). NR C4-type zinc fingers lie at residues 363-383 (CKVCGDKASGYHYGVTSCEGC) and 399-418 (CLRDGKCLVIRLNRNRCQYC). Residues 444–557 (ELNGAAASSA…NNNSSSGNAS (114 aa)) are disordered. Positions 447–460 (GAAASSAAAGAPAS) are enriched in low complexity. Residues 463–472 (VDDSTSSTLH) show a composition bias toward polar residues. Positions 475–508 (HLQQQQQQHLLQQQQQQQHQPQLQQHHQLQQQPH) are enriched in low complexity. A compositionally biased stretch (polar residues) spans 516–533 (TPSTPQTPQMCSIASSPS). The span at 539 to 555 (NSANNNNNNNNNSSSGN) shows a compositional bias: low complexity. The NR LBD domain occupies 626 to 855 (YTEELTRELM…PPLFAEIFDI (230 aa)).

It belongs to the nuclear hormone receptor family. NR1 subfamily.

The protein resides in the nucleus. Functionally, induces the early late puff 78C which triggers puparium formation and development. This Drosophila melanogaster (Fruit fly) protein is Ecdysone-induced protein 78C (Eip78C).